Consider the following 424-residue polypeptide: Histidine--tRNA ligase (424 aa).

This sequence belongs to the class-II aminoacyl-tRNA synthetase family. Homodimer.

Its subcellular location is the cytoplasm. It catalyses the reaction tRNA(His) + L-histidine + ATP = L-histidyl-tRNA(His) + AMP + diphosphate + H(+). The chain is Histidine--tRNA ligase from Shewanella woodyi (strain ATCC 51908 / MS32).